The following is a 239-amino-acid chain: uncharacterized protein (239 aa).

Positions Arg-193 to Ser-214 are disordered.

It is found in the nucleus. This is an uncharacterized protein from Schizosaccharomyces pombe (strain 972 / ATCC 24843) (Fission yeast).